The primary structure comprises 249 residues: Cis-4-hydroxycyclohexanecarboxylate dehydrogenase (249 aa).

8 residues coordinate NAD(+): aspartate 38, aspartate 63, valine 64, asparagine 90, tyrosine 156, lysine 160, alanine 189, and threonine 191. Tyrosine 156 functions as the Proton acceptor in the catalytic mechanism.

The protein belongs to the short-chain dehydrogenases/reductases (SDR) family. In terms of assembly, homotetramer.

It catalyses the reaction cis-4-hydroxycyclohexane-1-carboxylate + NAD(+) = 4-oxocyclohexane-1-carboxylate + NADH + H(+). Dehydrogenase involved in a cyclohexanecarboxylate (CHCA) degradation pathway. Catalyzes the NAD(+)-dependent dehydrogenation of cis-4-hydroxycyclohexanecarboxylate (cis-4-hydroxyCHCA) to form 4-oxocyclohexanecarboxylate (4-oxoCHCA). Is highly specific for the cis-4-hydroxy derivative and shows only weak activity with trans-4-hydroxyCHCA. Cannot use NADP(+). The chain is Cis-4-hydroxycyclohexanecarboxylate dehydrogenase from Sinomonas cyclohexanicum (Corynebacterium cyclohexanicum).